The sequence spans 376 residues: DnaJ homolog subfamily B member 12 (376 aa).

Residue Met-1 is modified to N-acetylmethionine. The disordered stretch occupies residues Ala-45 to Ser-97. A compositionally biased stretch (low complexity) spans Thr-57–Gly-84. One can recognise a J domain in the interval Asp-111 to Gly-175. His-186 bears the Pros-methylhistidine mark. A helical membrane pass occupies residues Gly-243–Leu-263.

It belongs to the DnaJ family. DNAJB12/DNAJB14 subfamily. Homodimer and homotetramer. Interacts (via J domain) with HSPA8/Hsc70. Forms a multiprotein complex, at least composed of DNAJB12, DNAJB14, HSPA8/Hsc70 and SGTA; interaction with DNAJB14 and HSPA8/Hsc70 is direct. Methylated at His-186 by METTL9.

Its subcellular location is the endoplasmic reticulum membrane. The protein resides in the nucleus membrane. Acts as a co-chaperone with HSPA8/Hsc70; required to promote protein folding and trafficking, prevent aggregation of client proteins, and promote unfolded proteins to endoplasmic reticulum-associated degradation (ERAD) pathway. Acts by determining HSPA8/Hsc70's ATPase and polypeptide-binding activities. Can also act independently of HSPA8/Hsc70: together with DNAJB14, acts as a chaperone that promotes maturation of potassium channels KCND2 and KCNH2 by stabilizing nascent channel subunits and assembling them into tetramers. While stabilization of nascent channel proteins is dependent on HSPA8/Hsc70, the process of oligomerization of channel subunits is independent of HSPA8/Hsc70. When overexpressed, forms membranous structures together with DNAJB14 and HSPA8/Hsc70 within the nucleus; the role of these structures, named DJANGOs, is still unclear. The sequence is that of DnaJ homolog subfamily B member 12 from Mus musculus (Mouse).